The chain runs to 143 residues: Small ribosomal subunit protein eS12 (143 aa).

This sequence belongs to the eukaryotic ribosomal protein eS12 family. In terms of assembly, component of the small ribosomal subunit. Mature ribosomes consist of a small (40S) and a large (60S) subunit. The 40S subunit contains about 32 different proteins and 1 molecule of RNA (18S). The 60S subunit contains 45 different proteins and 3 molecules of RNA (25S, 5.8S and 5S).

It is found in the cytoplasm. Its function is as follows. Component of the ribosome, a large ribonucleoprotein complex responsible for the synthesis of proteins in the cell. The small ribosomal subunit (SSU) binds messenger RNAs (mRNAs) and translates the encoded message by selecting cognate aminoacyl-transfer RNA (tRNA) molecules. The large subunit (LSU) contains the ribosomal catalytic site termed the peptidyl transferase center (PTC), which catalyzes the formation of peptide bonds, thereby polymerizing the amino acids delivered by tRNAs into a polypeptide chain. The nascent polypeptides leave the ribosome through a tunnel in the LSU and interact with protein factors that function in enzymatic processing, targeting, and the membrane insertion of nascent chains at the exit of the ribosomal tunnel. The polypeptide is Small ribosomal subunit protein eS12 (RPS12) (Candida albicans (strain SC5314 / ATCC MYA-2876) (Yeast)).